Reading from the N-terminus, the 246-residue chain is Adenosylcobinamide-GDP ribazoletransferase (246 aa).

Helical transmembrane passes span 37–57, 64–84, 100–122, 139–159, 185–205, and 223–243; these read FPAVGLVIGAAVAGAAWAGAL, ALAALIVWVGVTGALHLDGLA, LLAVLADPHVGSFGVVAIVLQLL, ALVLVPFAARIGPLVWTWWLM, LAAAAWFTPALLVTPLLVLWW, and AGIELIETGLLLSVAITGLWI.

It belongs to the CobS family. It depends on Mg(2+) as a cofactor.

The protein localises to the cell inner membrane. It catalyses the reaction alpha-ribazole + adenosylcob(III)inamide-GDP = adenosylcob(III)alamin + GMP + H(+). The catalysed reaction is alpha-ribazole 5'-phosphate + adenosylcob(III)inamide-GDP = adenosylcob(III)alamin 5'-phosphate + GMP + H(+). The protein operates within cofactor biosynthesis; adenosylcobalamin biosynthesis; adenosylcobalamin from cob(II)yrinate a,c-diamide: step 7/7. Functionally, joins adenosylcobinamide-GDP and alpha-ribazole to generate adenosylcobalamin (Ado-cobalamin). Also synthesizes adenosylcobalamin 5'-phosphate from adenosylcobinamide-GDP and alpha-ribazole 5'-phosphate. This is Adenosylcobinamide-GDP ribazoletransferase from Novosphingobium aromaticivorans (strain ATCC 700278 / DSM 12444 / CCUG 56034 / CIP 105152 / NBRC 16084 / F199).